Consider the following 353-residue polypeptide: Glycerol-3-phosphate dehydrogenase [NAD(+)], cytoplasmic (353 aa).

Ala2 is subject to Blocked amino end (Ala). NAD(+) contacts are provided by residues 11–16, Phe98, Lys121, and Ala155; that span reads GSGNWG. Lys121 contributes to the substrate binding site. The active-site Proton acceptor is Lys206. Residues Arg270 and Gln299 each coordinate NAD(+). 270–271 is a binding site for substrate; that stretch reads RN.

Belongs to the NAD-dependent glycerol-3-phosphate dehydrogenase family. As to quaternary structure, homodimer.

The protein resides in the cytoplasm. It carries out the reaction sn-glycerol 3-phosphate + NAD(+) = dihydroxyacetone phosphate + NADH + H(+). It functions in the pathway phospholipid metabolism; alpha-glycerophosphate cycle. The polypeptide is Glycerol-3-phosphate dehydrogenase [NAD(+)], cytoplasmic (Drosophila virilis (Fruit fly)).